The following is a 1318-amino-acid chain: MDFRITEGSSPTSLSVSEKIAKLESCNDSRITCRPVRESKPTYTSGQKHSALLSKLKRSKVTTDFCKLEESKGIICQENLHTEGAKSKTENISGEDKSSQRRTRLKQIQEFISHRRSFLNSNANSVESEKILAENNHMFNVKSKLSNKESFIKTRRPRTNGELSDLSLQPKRIFSEPVNSHPSQSMFGNGVRASSGSYSLKRDLKDYEEELPSSKKRQRTPPPIVVTNFPQEIFPSKKISLSAKRRIQGKYSGENVRARIELARERNRKRDYVSNLSKGHTTNALEENPFNLGPNYRASTRKCNRIKEAINLFAAKNGSMEVPPKVSVGDSVLTTSQKFLQVIREKTALLMNQDSNSVQPQALAAAESPTTKAPTTKAPTSEAPPKGHVKQLAKQLGNIYMPQSINNVEPTSHSSISKVVNPSEKVISKIERACLAGNGNVHPSIKMEKNLELNPHPRTLNATEHKINSRIQVSKLNTKNELANADPKMYLLENLSDRLYFCKLAKLLLRKYPLDIAEHQFALVYSRFQRIPLKQISCLKQSLVAYYSVLSEVGITNEIMLRENRFSSPKTPEGLVSISKLLLDDREHLSHDERSYIQQLQSQIKSQSVHHENAAEEIRKMRNLRNSRINSQQVGEKVFVNPDVKTMDIQETFLQDYEDETFANEGLSASKFKEEFLLISDSKSDLNSEEIATPNSLEFKNNPRIKVPRSLLTILNLHDRSQLKLFEVCHNSEFKDPINLSNCLRNLLEKQLLSYNFTDWFASLGSEYENVYVKFISHYDFSSLNVYASFQKLCCDLYYGSDDYIHSPILQVFASCWLKQNSNYGFLNEDIIVKIVLILIDLHKSTYSKKLNSYVVPMETFVKYALEKLRPLISPDSVCILSKEDKKHWLKYKKNRSTFAKLLFSTWSNLPSDIGFILECMLKEYYDTFLKSPFAVPNAVQAQLHNQVRGDLTPKRNRSSLISELMKSSKLLKQESSGNKNSTSLESDAFKESSFVLNEENGGIYAGKEIDLPEPSVIDGRPHFSVFNYTHHMQEEKTHNRLPWHRRGMISYKKMVLSKNNRWVAGYWKKKYCIVDSGKLIFYKSDHLDPNACSNVSPIHREFGLQSCLASPNLPPSINSNRNNVFYLNIPGNECYLFEAPSVLAMNEWIHSLNFNAAMITCPPLPENITNTEYGWGYILTRAEKKAYYTAADGTKTFVGDLAQLTRWSPMDIQGLQDIPRPLRDKVHILRDCVPSLLETCLLFQSLPEKMEKCFAAGSKNYLKAMDNWNRKMKFLYERSMMYKEYQRVLECEYEYRKSHDFYPTLSPVRYPYDFKGL.

3 disordered regions span residues 177–198 (PVNSHPSQSMFGNGVRASSGSY), 208–227 (EEELPSSKKRQRTPPPIVVT), and 360–387 (PQALAAAESPTTKAPTTKAPTSEAPPKG). The span at 364-384 (AAAESPTTKAPTTKAPTSEAP) shows a compositional bias: low complexity. A PH domain is found at 1049–1158 (MISYKKMVLS…WIHSLNFNAA (110 aa)).

Its subcellular location is the nucleus. In terms of biological role, appears to have a role in sporulation. The sequence is that of Meiotically up-regulated gene 79 protein (mug79) from Schizosaccharomyces pombe (strain 972 / ATCC 24843) (Fission yeast).